The primary structure comprises 216 residues: MOB kinase activator 3C (216 aa).

The Zn(2+) site is built by cysteine 82, cysteine 87, histidine 164, and histidine 169.

This sequence belongs to the MOB1/phocein family.

May regulate the activity of kinases. In Homo sapiens (Human), this protein is MOB kinase activator 3C (MOB3C).